The sequence spans 123 residues: Large-conductance mechanosensitive channel (123 aa).

The next 2 helical transmembrane spans lie at V14–L34 and G67–V87.

The protein belongs to the MscL family. Homopentamer.

Its subcellular location is the cell membrane. In terms of biological role, channel that opens in response to stretch forces in the membrane lipid bilayer. May participate in the regulation of osmotic pressure changes within the cell. This is Large-conductance mechanosensitive channel from Lacticaseibacillus casei (strain BL23) (Lactobacillus casei).